Consider the following 750-residue polypeptide: Alpha-galactosidase C (750 aa).

An N-terminal signal peptide occupies residues 1–26; sequence MFRSTATVAAATAMGLLTATGHGSLA. N-linked (GlcNAc...) asparagine glycans are attached at residues asparagine 58, asparagine 162, asparagine 186, asparagine 194, asparagine 366, asparagine 428, asparagine 432, and asparagine 453. The active-site Nucleophile is the aspartate 511. Catalysis depends on aspartate 573, which acts as the Proton donor.

The protein belongs to the glycosyl hydrolase 36 family. As to quaternary structure, homotetramer. The cofactor is Mg(2+). It depends on NAD(+) as a cofactor.

Its subcellular location is the secreted. It carries out the reaction Hydrolysis of terminal, non-reducing alpha-D-galactose residues in alpha-D-galactosides, including galactose oligosaccharides, galactomannans and galactolipids.. Functionally, hydrolyzes a variety of simple alpha-D-galactoside as well as more complex molecules such as oligosaccharides and polysaccharides. Active on paranitrophenyl-alpha-galactoside, raffinose, locust bean gum and gum guar. This is Alpha-galactosidase C (aglC) from Emericella nidulans (strain FGSC A4 / ATCC 38163 / CBS 112.46 / NRRL 194 / M139) (Aspergillus nidulans).